Reading from the N-terminus, the 489-residue chain is Rhamnulokinase (489 aa).

13-17 (ASSGR) contributes to the ATP binding site. A disulfide bridge links C68 with C222. Substrate contacts are provided by residues G83 and 236 to 238 (HDT). D237 serves as the catalytic Proton acceptor. An ATP-binding site is contributed by T259. Position 296 (N296) interacts with substrate. Q304 provides a ligand contact to ATP. The cysteines at positions 353 and 370 are disulfide-linked. G402 is a binding site for ATP. C413 and C417 are disulfide-bonded.

Belongs to the rhamnulokinase family. In terms of assembly, monomer. The cofactor is Mg(2+).

The catalysed reaction is L-rhamnulose + ATP = L-rhamnulose 1-phosphate + ADP + H(+). It participates in carbohydrate degradation; L-rhamnose degradation; glycerone phosphate from L-rhamnose: step 2/3. Its function is as follows. Involved in the catabolism of L-rhamnose (6-deoxy-L-mannose). Catalyzes the transfer of the gamma-phosphate group from ATP to the 1-hydroxyl group of L-rhamnulose to yield L-rhamnulose 1-phosphate. This Escherichia coli (strain K12 / DH10B) protein is Rhamnulokinase.